A 1500-amino-acid chain; its full sequence is DNA-directed RNA polymerase subunit beta' (1500 aa).

Zn(2+) contacts are provided by Cys60, Cys62, Cys75, and Cys78. Residues 180–199 (DLGGMETAQRSTQRQIEEDY) are disordered. 3 residues coordinate Mg(2+): Asp626, Asp628, and Asp630. Residues Cys1002, Cys1075, Cys1082, and Cys1085 each coordinate Zn(2+). The interval 1440–1500 (EVQQAEKSAE…DSDHPDLSSL (61 aa)) is disordered. The span at 1449–1468 (EPTTTALPTTNGHQAPQSDT) shows a compositional bias: polar residues.

It belongs to the RNA polymerase beta' chain family. As to quaternary structure, the RNAP catalytic core consists of 2 alpha, 1 beta, 1 beta' and 1 omega subunit. When a sigma factor is associated with the core the holoenzyme is formed, which can initiate transcription. Mg(2+) serves as cofactor. Zn(2+) is required as a cofactor.

The enzyme catalyses RNA(n) + a ribonucleoside 5'-triphosphate = RNA(n+1) + diphosphate. Functionally, DNA-dependent RNA polymerase catalyzes the transcription of DNA into RNA using the four ribonucleoside triphosphates as substrates. The polypeptide is DNA-directed RNA polymerase subunit beta' (Chloroflexus aggregans (strain MD-66 / DSM 9485)).